A 41-amino-acid polypeptide reads, in one-letter code: Large ribosomal subunit protein bL36A (41 aa).

It belongs to the bacterial ribosomal protein bL36 family.

The polypeptide is Large ribosomal subunit protein bL36A (Aeromonas salmonicida (strain A449)).